Here is a 123-residue protein sequence, read N- to C-terminus: Protein Rev (123 aa).

A phosphoserine; by host CK2 mark is found at S5 and S8. A homomultimerization region spans residues 18 to 26; it reads IIKILYQSN. 2 disordered regions span residues 24–49 and 82–123; these read QSNP…RARQ and TLDS…GAKN. Positions 34-50 match the Nuclear localization signal and RNA-binding (RRE) motif; the sequence is SRQARRNRRRRWRARQR. Residues 36–49 are compositionally biased toward basic residues; the sequence is QARRNRRRRWRARQ. The Nuclear export signal and binding to XPO1 motif lies at 73–84; it reads LPLPPIERLTLD. The span at 97-112 shows a compositional bias: polar residues; the sequence is PQGTETGTGSPNTPEG.

It belongs to the HIV-1 REV protein family. In terms of assembly, homomultimer; when bound to the RRE. Multimeric assembly is essential for activity and may involve XPO1. Binds to human KPNB1, XPO1, TNPO1, RANBP5 and IPO7. Interacts with the viral Integrase. Interacts with human KHDRBS1. Interacts with human NAP1; this interaction decreases Rev multimerization and stimulates its activity. Interacts with human DEAD-box helicases DDX3 and DDX24; these interactions may serve for viral RNA export to the cytoplasm and packaging, respectively. Interacts with human PSIP1; this interaction may inhibit HIV-1 DNA integration by promoting dissociation of the Integrase-LEDGF/p75 complex. Post-translationally, asymmetrically arginine dimethylated at one site by host PRMT6. Methylation impairs the RNA-binding activity and export of viral RNA from the nucleus to the cytoplasm. Phosphorylated by protein kinase CK2. Presence of, and maybe binding to the N-terminus of the regulatory beta subunit of CK2 is necessary for CK2-mediated Rev's phosphorylation.

It is found in the host nucleus. The protein localises to the host nucleolus. It localises to the host cytoplasm. In terms of biological role, escorts unspliced or incompletely spliced viral pre-mRNAs (late transcripts) out of the nucleus of infected cells. These pre-mRNAs carry a recognition sequence called Rev responsive element (RRE) located in the env gene, that is not present in fully spliced viral mRNAs (early transcripts). This function is essential since most viral proteins are translated from unspliced or partially spliced pre-mRNAs which cannot exit the nucleus by the pathway used by fully processed cellular mRNAs. Rev itself is translated from a fully spliced mRNA that readily exits the nucleus. Rev's nuclear localization signal (NLS) binds directly to KPNB1/Importin beta-1 without previous binding to KPNA1/Importin alpha-1. KPNB1 binds to the GDP bound form of RAN (Ran-GDP) and targets Rev to the nucleus. In the nucleus, the conversion from Ran-GDP to Ran-GTP dissociates Rev from KPNB1 and allows Rev's binding to the RRE in viral pre-mRNAs. Rev multimerization on the RRE via cooperative assembly exposes its nuclear export signal (NES) to the surface. Rev can then form a complex with XPO1/CRM1 and Ran-GTP, leading to nuclear export of the complex. Conversion from Ran-GTP to Ran-GDP mediates dissociation of the Rev/RRE/XPO1/RAN complex, so that Rev can return to the nucleus for a subsequent round of export. Beside KPNB1, also seems to interact with TNPO1/Transportin-1, RANBP5/IPO5 and IPO7/RANBP7 for nuclear import. The nucleoporin-like HRB/RIP is an essential cofactor that probably indirectly interacts with Rev to release HIV RNAs from the perinuclear region to the cytoplasm. The protein is Protein Rev of Simian immunodeficiency virus (isolate MB66) (SIV-cpz).